We begin with the raw amino-acid sequence, 73 residues long: Translational regulator CsrA (73 aa).

Belongs to the CsrA/RsmA family. As to quaternary structure, homodimer; the beta-strands of each monomer intercalate to form a hydrophobic core, while the alpha-helices form wings that extend away from the core.

The protein resides in the cytoplasm. In terms of biological role, a translational regulator that binds mRNA to regulate translation initiation and/or mRNA stability. Usually binds in the 5'-UTR at or near the Shine-Dalgarno sequence preventing ribosome-binding, thus repressing translation. Its main target seems to be the major flagellin gene, while its function is anatagonized by FliW. This Lachnospira eligens (strain ATCC 27750 / DSM 3376 / VPI C15-48 / C15-B4) (Eubacterium eligens) protein is Translational regulator CsrA.